The chain runs to 166 residues: MSEPTSRRPAYARLLDRAVRILAVRDHSEQELRRKLSAPVMGKNGPEEIDATADDYERVIAWCHEHHYLDDERFVMRFIASRSRKGYGPARIYQELNQKGISRESTEKAMRECEIDWSEMAHEQAVRKYGEPLPSNFSEKVKVQRFLLYRGYLMDDIQQIWRNFAD.

Belongs to the RecX family.

Its subcellular location is the cytoplasm. In terms of biological role, modulates RecA activity. The polypeptide is Regulatory protein RecX (Salmonella paratyphi C (strain RKS4594)).